The chain runs to 417 residues: Serine hydroxymethyltransferase (417 aa).

Residues Leu121 and 125 to 127 (GHL) each bind (6S)-5,6,7,8-tetrahydrofolate. Lys229 carries the N6-(pyridoxal phosphate)lysine modification. (6S)-5,6,7,8-tetrahydrofolate is bound at residue 355–357 (SPF).

This sequence belongs to the SHMT family. Homodimer. It depends on pyridoxal 5'-phosphate as a cofactor.

It is found in the cytoplasm. It carries out the reaction (6R)-5,10-methylene-5,6,7,8-tetrahydrofolate + glycine + H2O = (6S)-5,6,7,8-tetrahydrofolate + L-serine. It participates in one-carbon metabolism; tetrahydrofolate interconversion. Its pathway is amino-acid biosynthesis; glycine biosynthesis; glycine from L-serine: step 1/1. Functionally, catalyzes the reversible interconversion of serine and glycine with tetrahydrofolate (THF) serving as the one-carbon carrier. This reaction serves as the major source of one-carbon groups required for the biosynthesis of purines, thymidylate, methionine, and other important biomolecules. Also exhibits THF-independent aldolase activity toward beta-hydroxyamino acids, producing glycine and aldehydes, via a retro-aldol mechanism. In Shewanella baltica (strain OS223), this protein is Serine hydroxymethyltransferase.